The following is a 339-amino-acid chain: NADH-quinone oxidoreductase subunit H (339 aa).

A run of 9 helical transmembrane segments spans residues 10–30 (FPLT…ILCV), 50–70 (PNVV…KLLF), 82–102 (ILFI…WAVI), 115–135 (VGVL…IIAG), 161–181 (MGLV…SGII), 187–207 (LPWW…ISVL), 235–255 (MGFA…SAMT), 275–295 (IPGF…FLWI), and 311–331 (GWKV…SVLF).

It belongs to the complex I subunit 1 family. In terms of assembly, NDH-1 is composed of 14 different subunits. Subunits NuoA, H, J, K, L, M, N constitute the membrane sector of the complex.

It is found in the cell inner membrane. It carries out the reaction a quinone + NADH + 5 H(+)(in) = a quinol + NAD(+) + 4 H(+)(out). Functionally, NDH-1 shuttles electrons from NADH, via FMN and iron-sulfur (Fe-S) centers, to quinones in the respiratory chain. The immediate electron acceptor for the enzyme in this species is believed to be ubiquinone. Couples the redox reaction to proton translocation (for every two electrons transferred, four hydrogen ions are translocated across the cytoplasmic membrane), and thus conserves the redox energy in a proton gradient. This subunit may bind ubiquinone. The sequence is that of NADH-quinone oxidoreductase subunit H from Rickettsia prowazekii (strain Madrid E).